Reading from the N-terminus, the 73-residue chain is Putative membrane protein insertion efficiency factor (73 aa).

It belongs to the UPF0161 family.

The protein resides in the cell inner membrane. Functionally, could be involved in insertion of integral membrane proteins into the membrane. The chain is Putative membrane protein insertion efficiency factor from Jannaschia sp. (strain CCS1).